The following is a 518-amino-acid chain: Protein translocase subunit SecD (518 aa).

The next 6 membrane-spanning stretches (helical) occupy residues isoleucine 9–glutamine 29, glycine 356–glycine 376, valine 377–leucine 397, leucine 406–isoleucine 426, alanine 451–glycine 473, and isoleucine 486–tryptophan 506.

The protein belongs to the SecD/SecF family. SecD subfamily. In terms of assembly, forms a complex with SecF. Part of the essential Sec protein translocation apparatus which comprises SecA, SecYEG and auxiliary proteins SecDF-YajC and YidC.

It is found in the cell inner membrane. Its function is as follows. Part of the Sec protein translocase complex. Interacts with the SecYEG preprotein conducting channel. SecDF uses the proton motive force (PMF) to complete protein translocation after the ATP-dependent function of SecA. The chain is Protein translocase subunit SecD from Rickettsia typhi (strain ATCC VR-144 / Wilmington).